Here is a 154-residue protein sequence, read N- to C-terminus: Transcription antitermination protein NusB (154 aa).

Belongs to the NusB family.

Functionally, involved in transcription antitermination. Required for transcription of ribosomal RNA (rRNA) genes. Binds specifically to the boxA antiterminator sequence of the ribosomal RNA (rrn) operons. This Desulfosudis oleivorans (strain DSM 6200 / JCM 39069 / Hxd3) (Desulfococcus oleovorans) protein is Transcription antitermination protein NusB.